A 200-amino-acid polypeptide reads, in one-letter code: Holliday junction branch migration complex subunit RuvA (200 aa).

The domain I stretch occupies residues 1-64 (MIGQLTGLVG…EDAIQLFGFA (64 aa)). Positions 65-143 (TTDERDWFRL…KMPGGGGTVS (79 aa)) are domain II. The flexible linker stretch occupies residues 144–148 (APGIV). A domain III region spans residues 149–200 (SGPSVENDALLALAGLGFRRAEAWPVLSKVLAENENATLDLAIRLSLKDLAR).

This sequence belongs to the RuvA family. In terms of assembly, homotetramer. Forms an RuvA(8)-RuvB(12)-Holliday junction (HJ) complex. HJ DNA is sandwiched between 2 RuvA tetramers; dsDNA enters through RuvA and exits via RuvB. An RuvB hexamer assembles on each DNA strand where it exits the tetramer. Each RuvB hexamer is contacted by two RuvA subunits (via domain III) on 2 adjacent RuvB subunits; this complex drives branch migration. In the full resolvosome a probable DNA-RuvA(4)-RuvB(12)-RuvC(2) complex forms which resolves the HJ.

It is found in the cytoplasm. In terms of biological role, the RuvA-RuvB-RuvC complex processes Holliday junction (HJ) DNA during genetic recombination and DNA repair, while the RuvA-RuvB complex plays an important role in the rescue of blocked DNA replication forks via replication fork reversal (RFR). RuvA specifically binds to HJ cruciform DNA, conferring on it an open structure. The RuvB hexamer acts as an ATP-dependent pump, pulling dsDNA into and through the RuvAB complex. HJ branch migration allows RuvC to scan DNA until it finds its consensus sequence, where it cleaves and resolves the cruciform DNA. This is Holliday junction branch migration complex subunit RuvA from Gluconobacter oxydans (strain 621H) (Gluconobacter suboxydans).